Reading from the N-terminus, the 670-residue chain is Rhophilin-1 (670 aa).

Positions 1-20 (MILEERPDGAGAGEESPRLQ) are disordered. In terms of domain architecture, REM-1 spans 23 to 97 (DSLTQIQCGQ…LEELSGGVDP (75 aa)). S24 is subject to Phosphoserine. The region spanning 108–457 (PMIPLGLKET…LAKYAELDRE (350 aa)) is the BRO1 domain. A PDZ domain is found at 513–592 (PVHLTRGEGG…ASLQVVSLLP (80 aa)). The segment at 616–670 (QREHGCKTPASTWASPRPLLNWSRKAQQGKTGGCPQPCAPVKPAPPSSLKHPGWP) is disordered. Residues 652–661 (PCAPVKPAPP) show a composition bias toward pro residues.

The protein belongs to the RHPN family. In terms of assembly, binds specifically to GTP-Rho. Interacts with ROPN1.

In terms of biological role, has no enzymatic activity. May serve as a target for Rho, and interact with some cytoskeletal component upon Rho binding or relay a Rho signal to other molecules. This chain is Rhophilin-1, found in Homo sapiens (Human).